A 190-amino-acid chain; its full sequence is Holliday junction branch migration complex subunit RuvA (190 aa).

The segment at 1-65 is domain I; sequence MIGTLSGTVE…DGVSQLYGFA (65 aa). Positions 66 to 137 are domain II; it reads NREEQNCMRM…LTPQVQKFEL (72 aa). Positions 137 to 141 are flexible linker; that stretch reads LNRFA. A domain III region spans residues 142 to 190; it reads ATTRTDSEAVAALLSLGYERTAALGALQKVGVCDSTEDAVRRALLELSK.

Belongs to the RuvA family. Homotetramer. Forms an RuvA(8)-RuvB(12)-Holliday junction (HJ) complex. HJ DNA is sandwiched between 2 RuvA tetramers; dsDNA enters through RuvA and exits via RuvB. An RuvB hexamer assembles on each DNA strand where it exits the tetramer. Each RuvB hexamer is contacted by two RuvA subunits (via domain III) on 2 adjacent RuvB subunits; this complex drives branch migration. In the full resolvosome a probable DNA-RuvA(4)-RuvB(12)-RuvC(2) complex forms which resolves the HJ.

It is found in the cytoplasm. The RuvA-RuvB-RuvC complex processes Holliday junction (HJ) DNA during genetic recombination and DNA repair, while the RuvA-RuvB complex plays an important role in the rescue of blocked DNA replication forks via replication fork reversal (RFR). RuvA specifically binds to HJ cruciform DNA, conferring on it an open structure. The RuvB hexamer acts as an ATP-dependent pump, pulling dsDNA into and through the RuvAB complex. HJ branch migration allows RuvC to scan DNA until it finds its consensus sequence, where it cleaves and resolves the cruciform DNA. This is Holliday junction branch migration complex subunit RuvA from Anaplasma marginale (strain Florida).